The following is a 130-amino-acid chain: Large ribosomal subunit protein eL32 (130 aa).

The protein belongs to the eukaryotic ribosomal protein eL32 family.

This is Large ribosomal subunit protein eL32 (rpl32e) from Pyrococcus horikoshii (strain ATCC 700860 / DSM 12428 / JCM 9974 / NBRC 100139 / OT-3).